Reading from the N-terminus, the 325-residue chain is 4-hydroxy-3-methylbut-2-enyl diphosphate reductase (325 aa).

Cysteine 13 serves as a coordination point for [4Fe-4S] cluster. (2E)-4-hydroxy-3-methylbut-2-enyl diphosphate-binding residues include histidine 42 and histidine 76. Histidine 42 and histidine 76 together coordinate dimethylallyl diphosphate. Positions 42 and 76 each coordinate isopentenyl diphosphate. Position 98 (cysteine 98) interacts with [4Fe-4S] cluster. (2E)-4-hydroxy-3-methylbut-2-enyl diphosphate is bound at residue histidine 126. Dimethylallyl diphosphate is bound at residue histidine 126. Histidine 126 lines the isopentenyl diphosphate pocket. Glutamate 128 serves as the catalytic Proton donor. Threonine 169 serves as a coordination point for (2E)-4-hydroxy-3-methylbut-2-enyl diphosphate. Cysteine 230 is a binding site for [4Fe-4S] cluster. 4 residues coordinate (2E)-4-hydroxy-3-methylbut-2-enyl diphosphate: serine 258, serine 259, asparagine 260, and serine 306. Residues serine 258, serine 259, asparagine 260, and serine 306 each contribute to the dimethylallyl diphosphate site. Serine 258, serine 259, asparagine 260, and serine 306 together coordinate isopentenyl diphosphate.

This sequence belongs to the IspH family. [4Fe-4S] cluster is required as a cofactor.

It carries out the reaction isopentenyl diphosphate + 2 oxidized [2Fe-2S]-[ferredoxin] + H2O = (2E)-4-hydroxy-3-methylbut-2-enyl diphosphate + 2 reduced [2Fe-2S]-[ferredoxin] + 2 H(+). The catalysed reaction is dimethylallyl diphosphate + 2 oxidized [2Fe-2S]-[ferredoxin] + H2O = (2E)-4-hydroxy-3-methylbut-2-enyl diphosphate + 2 reduced [2Fe-2S]-[ferredoxin] + 2 H(+). Its pathway is isoprenoid biosynthesis; dimethylallyl diphosphate biosynthesis; dimethylallyl diphosphate from (2E)-4-hydroxy-3-methylbutenyl diphosphate: step 1/1. The protein operates within isoprenoid biosynthesis; isopentenyl diphosphate biosynthesis via DXP pathway; isopentenyl diphosphate from 1-deoxy-D-xylulose 5-phosphate: step 6/6. Its function is as follows. Catalyzes the conversion of 1-hydroxy-2-methyl-2-(E)-butenyl 4-diphosphate (HMBPP) into a mixture of isopentenyl diphosphate (IPP) and dimethylallyl diphosphate (DMAPP). Acts in the terminal step of the DOXP/MEP pathway for isoprenoid precursor biosynthesis. The chain is 4-hydroxy-3-methylbut-2-enyl diphosphate reductase from Prosthecochloris aestuarii (strain DSM 271 / SK 413).